Reading from the N-terminus, the 200-residue chain is Beta-1,6-glucan synthesis-associated protein KEG1 (200 aa).

Over 1–15 the chain is Lumenal; sequence MAGIKLTHKLYQYYQ. A helical membrane pass occupies residues 16–36; it reads LATSFLYAALLIRWLILMPLV. Over 37 to 44 the chain is Cytoplasmic; the sequence is GSRFLPGG. Residues 45-65 traverse the membrane as a helical segment; that stretch reads IHEFLIYLMFYSSIMEVIWLL. At 66–82 the chain is on the lumenal side; that stretch reads RFHGFKYGLLSRTFLKD. A helical membrane pass occupies residues 83–103; sequence LNFIYLVSVIHFYDDYEHALI. Over 104 to 145 the chain is Cytoplasmic; the sequence is LKNASYSSFIISLSLSQAYCHWCKLFKRKGVKERTLVWKVNT. Residues 146–166 form a helical membrane-spanning segment; sequence FVTLPILYLSEFALLLLNIQV. At 167–173 the chain is on the lumenal side; that stretch reads KNYHSTP. The chain crosses the membrane as a helical span at residues 174 to 194; that stretch reads TLDIINRVVLLAYFPVLLTAY. At 195-200 the chain is on the cytoplasmic side; the sequence is KKLLTK.

In terms of assembly, interacts with KRE6.

Its subcellular location is the endoplasmic reticulum membrane. Its function is as follows. Involved in the biosynthesis of (1-&gt;6)-beta-D-glucan polymers of the cell wall. Required for viability. Involved in maintaining chromosome stability. In Saccharomyces cerevisiae (strain ATCC 204508 / S288c) (Baker's yeast), this protein is Beta-1,6-glucan synthesis-associated protein KEG1 (KEG1).